The following is a 449-amino-acid chain: MRECISVHVGQAGVQMGNACWELYCLEHGIQPDGQMPSDKTIGGGDDSFTTFFSETGAGKHVPRAVFVDLEPTVIDEVRAGTYRQLFHPEQLITGKEDAANNYARGHYTIGKEIIDPVLDRIRKLADQCTGLQGFLVFHSFGGGTGSGFTSLLMERLSVDYGKKSKLEFSIYPAPQVSTAVVEPYNSILTTHTTLEHSDCAFMVDNEAIYDICRRNLDIERPTYTNLNRLISQIVSSITASLRFDGALNVDLTEFQTNLVPYPRIHFPLATYAPVISAEKAYHEQLSVSEITNACFEPANQMVKCDPRHGKYMACCLLYRGDVVPKDVNAAIAAIKTKRTIQFVDWCPTGFKVGINYQPPTAVPGGDLAKVQRAVCMLSNTTAIAEAWARLDHKFDLMYAKRAFVHWYVGEGMEEGEFSEAREDMAALEKDYEEVGIDSYEDEDEGEEY.

An MREC motif motif is present at residues 1 to 4 (MREC). Glutamine 11 contributes to the GTP binding site. Lysine 40 is subject to N6-acetyllysine. GTP-binding residues include glutamate 71, serine 140, glycine 144, threonine 145, threonine 179, asparagine 206, and asparagine 228. Glutamate 71 lines the Mg(2+) pocket. Glutamate 254 is a catalytic residue. Glutamate 443 bears the 5-glutamyl polyglutamate mark.

It belongs to the tubulin family. As to quaternary structure, dimer of alpha and beta chains. A typical microtubule is a hollow water-filled tube with an outer diameter of 25 nm and an inner diameter of 15 nM. Alpha-beta heterodimers associate head-to-tail to form protofilaments running lengthwise along the microtubule wall with the beta-tubulin subunit facing the microtubule plus end conferring a structural polarity. Microtubules usually have 13 protofilaments but different protofilament numbers can be found in some organisms and specialized cells. Requires Mg(2+) as cofactor. Post-translationally, some glutamate residues at the C-terminus are polyglycylated, resulting in polyglycine chains on the gamma-carboxyl group. Glycylation is mainly limited to tubulin incorporated into axonemes (cilia and flagella) whereas glutamylation is prevalent in neuronal cells, centrioles, axonemes, and the mitotic spindle. Both modifications can coexist on the same protein on adjacent residues, and lowering polyglycylation levels increases polyglutamylation, and reciprocally. The precise function of polyglycylation is still unclear. In terms of processing, some glutamate residues at the C-terminus are polyglutamylated, resulting in polyglutamate chains on the gamma-carboxyl group. Polyglutamylation plays a key role in microtubule severing by spastin (SPAST). SPAST preferentially recognizes and acts on microtubules decorated with short polyglutamate tails: severing activity by SPAST increases as the number of glutamates per tubulin rises from one to eight, but decreases beyond this glutamylation threshold. Acetylation of alpha chains at Lys-40 is located inside the microtubule lumen. This modification has been correlated with increased microtubule stability, intracellular transport and ciliary assembly. Post-translationally, undergoes a tyrosination/detyrosination cycle, the cyclic removal and re-addition of a C-terminal tyrosine residue by the enzymes tubulin tyrosine carboxypeptidase (MATCAP1, VASH1 or VASH2) and tubulin tyrosine ligase (TTL), respectively. In terms of processing, tyrosination promotes microtubule interaction with CAP-Gly microtubule plus-end tracking proteins. Tyrosinated tubulins regulate the initiation of dynein-driven motility. Detyrosination is involved in metaphase plate congression by guiding chromosomes during mitosis. Detyrosination increases microtubules-dependent mechanotransduction in dystrophic cardiac and skeletal muscle. In cardiomyocytes, detyrosinated microtubules are required to resist to contractile compression during contraction.

Its subcellular location is the cytoplasm. It localises to the cytoskeleton. The enzyme catalyses GTP + H2O = GDP + phosphate + H(+). In terms of biological role, tubulin is the major constituent of microtubules, a cylinder consisting of laterally associated linear protofilaments composed of alpha- and beta-tubulin heterodimers. Microtubules grow by the addition of GTP-tubulin dimers to the microtubule end, where a stabilizing cap forms. Below the cap, tubulin dimers are in GDP-bound state, owing to GTPase activity of alpha-tubulin. The chain is Tubulin alpha chain (tuba) from Xenopus tropicalis (Western clawed frog).